Here is a 130-residue protein sequence, read N- to C-terminus: Small ribosomal subunit protein bS16 (130 aa).

The disordered stretch occupies residues 82 to 130 (VLPKTERNNPKKAVPGKKAQDRAEEKAAKAAEASEAPADEAPAEEAAAE). A compositionally biased stretch (basic and acidic residues) spans 99 to 110 (KAQDRAEEKAAK). Residues 118–130 (PADEAPAEEAAAE) are compositionally biased toward acidic residues.

This sequence belongs to the bacterial ribosomal protein bS16 family.

In Dinoroseobacter shibae (strain DSM 16493 / NCIMB 14021 / DFL 12), this protein is Small ribosomal subunit protein bS16.